A 248-amino-acid polypeptide reads, in one-letter code: Ubiquinone biosynthesis O-methyltransferase (248 aa).

Positions 41, 72, 93, and 136 each coordinate S-adenosyl-L-methionine.

It belongs to the methyltransferase superfamily. UbiG/COQ3 family.

The enzyme catalyses a 3-demethylubiquinol + S-adenosyl-L-methionine = a ubiquinol + S-adenosyl-L-homocysteine + H(+). The catalysed reaction is a 3-(all-trans-polyprenyl)benzene-1,2-diol + S-adenosyl-L-methionine = a 2-methoxy-6-(all-trans-polyprenyl)phenol + S-adenosyl-L-homocysteine + H(+). It functions in the pathway cofactor biosynthesis; ubiquinone biosynthesis. Functionally, O-methyltransferase that catalyzes the 2 O-methylation steps in the ubiquinone biosynthetic pathway. The sequence is that of Ubiquinone biosynthesis O-methyltransferase from Rhizobium johnstonii (strain DSM 114642 / LMG 32736 / 3841) (Rhizobium leguminosarum bv. viciae).